The chain runs to 586 residues: Pyruvate kinase (586 aa).

Arg-32 contacts substrate. K(+) is bound by residues Asn-34, Ser-36, Asp-66, and Thr-67. Position 34–37 (34–37 (NFSH)) interacts with ATP. Positions 73 and 156 each coordinate ATP. Residue Glu-222 coordinates Mg(2+). Gly-245, Asp-246, and Thr-278 together coordinate substrate. A Mg(2+)-binding site is contributed by Asp-246.

This sequence belongs to the pyruvate kinase family. The protein in the C-terminal section; belongs to the PEP-utilizing enzyme family. The cofactor is Mg(2+). Requires K(+) as cofactor.

The catalysed reaction is pyruvate + ATP = phosphoenolpyruvate + ADP + H(+). The protein operates within carbohydrate degradation; glycolysis; pyruvate from D-glyceraldehyde 3-phosphate: step 5/5. This chain is Pyruvate kinase (pyk), found in Staphylococcus haemolyticus (strain JCSC1435).